We begin with the raw amino-acid sequence, 311 residues long: UDP-N-acetylenolpyruvoylglucosamine reductase (311 aa).

Positions 34–198 (MGGAADLFIT…LEGTFRLQKG (165 aa)) constitute an FAD-binding PCMH-type domain. The active site involves arginine 177. The active-site Proton donor is the serine 227. Glutamate 297 is a catalytic residue.

Belongs to the MurB family. FAD is required as a cofactor.

It localises to the cytoplasm. It carries out the reaction UDP-N-acetyl-alpha-D-muramate + NADP(+) = UDP-N-acetyl-3-O-(1-carboxyvinyl)-alpha-D-glucosamine + NADPH + H(+). Its pathway is cell wall biogenesis; peptidoglycan biosynthesis. Functionally, cell wall formation. The polypeptide is UDP-N-acetylenolpyruvoylglucosamine reductase (Shouchella clausii (strain KSM-K16) (Alkalihalobacillus clausii)).